A 772-amino-acid polypeptide reads, in one-letter code: Ion-translocating oxidoreductase complex subunit C (772 aa).

4Fe-4S ferredoxin-type domains are found at residues 369–397 (GEPQ…QQLY) and 407–436 (KATT…VQYF). 8 residues coordinate [4Fe-4S] cluster: cysteine 377, cysteine 380, cysteine 383, cysteine 387, cysteine 416, cysteine 419, cysteine 422, and cysteine 426. Residues 599 to 748 (KARKLEQQQA…EPEEQVDPRK (150 aa)) form a disordered region.

Belongs to the 4Fe4S bacterial-type ferredoxin family. RnfC subfamily. The complex is composed of six subunits: RsxA, RsxB, RsxC, RsxD, RsxE and RsxG. [4Fe-4S] cluster serves as cofactor.

It is found in the cell inner membrane. In terms of biological role, part of a membrane-bound complex that couples electron transfer with translocation of ions across the membrane. Required to maintain the reduced state of SoxR. The sequence is that of Ion-translocating oxidoreductase complex subunit C from Shigella dysenteriae serotype 1 (strain Sd197).